The primary structure comprises 207 residues: Protein GrpE (207 aa).

2 stretches are compositionally biased toward basic and acidic residues: residues 1–11 (MEENRDVKNEE) and 57–66 (DLVKNQEEEN). Residues 1–66 (MEENRDVKNE…DLVKNQEEEN (66 aa)) form a disordered region.

The protein belongs to the GrpE family. Homodimer.

It localises to the cytoplasm. Its function is as follows. Participates actively in the response to hyperosmotic and heat shock by preventing the aggregation of stress-denatured proteins, in association with DnaK and GrpE. It is the nucleotide exchange factor for DnaK and may function as a thermosensor. Unfolded proteins bind initially to DnaJ; upon interaction with the DnaJ-bound protein, DnaK hydrolyzes its bound ATP, resulting in the formation of a stable complex. GrpE releases ADP from DnaK; ATP binding to DnaK triggers the release of the substrate protein, thus completing the reaction cycle. Several rounds of ATP-dependent interactions between DnaJ, DnaK and GrpE are required for fully efficient folding. The protein is Protein GrpE of Clostridium beijerinckii (strain ATCC 51743 / NCIMB 8052) (Clostridium acetobutylicum).